A 474-amino-acid polypeptide reads, in one-letter code: Glycogen synthase (474 aa).

Lys15 provides a ligand contact to ADP-alpha-D-glucose.

This sequence belongs to the glycosyltransferase 1 family. Bacterial/plant glycogen synthase subfamily.

The catalysed reaction is [(1-&gt;4)-alpha-D-glucosyl](n) + ADP-alpha-D-glucose = [(1-&gt;4)-alpha-D-glucosyl](n+1) + ADP + H(+). Its pathway is glycan biosynthesis; glycogen biosynthesis. Functionally, synthesizes alpha-1,4-glucan chains using ADP-glucose. This is Glycogen synthase from Chlamydia trachomatis serovar D (strain ATCC VR-885 / DSM 19411 / UW-3/Cx).